Here is a 424-residue protein sequence, read N- to C-terminus: uncharacterized protein (424 aa).

11 helical membrane-spanning segments follow: residues 9-29, 41-61, 86-106, 119-139, 148-168, 184-204, 222-242, 270-290, 320-340, 345-365, and 377-397; these read ITWIQGTALTIGAVLGCGILI, ASLFVWVFMSFLSFFLVGTLA, GAILGWIMLGSVPIGVPIIAL, ADWQITLIAGCMLAISILLHM, ISTLVICVIVFLLVTSIAVSL, WSAAGSVSVMIFFSFVGWEMI, LFLAASCVAGLYIMLSFVTVG, VTVCLALFITFATIHANIAGF, VLTAMAAVFGLVLAAHGLFQI, LLKGPSAAFIASYICTMAAAL, and MALGAFVACAVIYSFSGWALL.

The protein belongs to the amino acid-polyamine-organocation (APC) superfamily.

The protein resides in the cell membrane. This is an uncharacterized protein from Bacillus subtilis (strain 168).